Here is a 206-residue protein sequence, read N- to C-terminus: Pyrrolidone-carboxylate peptidase (206 aa).

Catalysis depends on residues Glu76, Cys139, and His163.

This sequence belongs to the peptidase C15 family. In terms of assembly, homotetramer.

Its subcellular location is the cytoplasm. The enzyme catalyses Release of an N-terminal pyroglutamyl group from a polypeptide, the second amino acid generally not being Pro.. Its function is as follows. Removes 5-oxoproline from various penultimate amino acid residues except L-proline. The sequence is that of Pyrrolidone-carboxylate peptidase (pcp) from Pyrococcus horikoshii (strain ATCC 700860 / DSM 12428 / JCM 9974 / NBRC 100139 / OT-3).